The sequence spans 566 residues: Putative ABC transporter ATP-binding protein BT9727_2424 (566 aa).

2 ABC transporter domains span residues 5–246 (ISFE…GLRE) and 300–533 (LKVE…ANLK). ATP contacts are provided by residues 39-46 (GRSGSGKS) and 333-340 (GHNGAGKS).

This sequence belongs to the ABC transporter superfamily.

It is found in the cell membrane. Its function is as follows. Probably part of an ABC transporter complex. Responsible for energy coupling to the transport system. The polypeptide is Putative ABC transporter ATP-binding protein BT9727_2424 (Bacillus thuringiensis subsp. konkukian (strain 97-27)).